Consider the following 494-residue polypeptide: Endoglucanase 22 (494 aa).

An N-terminal signal peptide occupies residues 1 to 21 (MKPLVCSFIVILLILLPTTIS). The active-site Nucleophile is the Asp-76. His-413 is a catalytic residue. Asn-468 carries N-linked (GlcNAc...) asparagine glycosylation. Glu-473 is a catalytic residue.

The protein belongs to the glycosyl hydrolase 9 (cellulase E) family.

It is found in the secreted. It catalyses the reaction Endohydrolysis of (1-&gt;4)-beta-D-glucosidic linkages in cellulose, lichenin and cereal beta-D-glucans.. In Arabidopsis thaliana (Mouse-ear cress), this protein is Endoglucanase 22 (GH9B16).